The following is a 576-amino-acid chain: 5'-nucleotidase (576 aa).

The first 28 residues, 1 to 28 (MRPAAAKVPKWLLLALSALLPQWPAASA), serve as a signal peptide directing secretion. D38 and H40 together coordinate Zn(2+). Residues C53 and C59 are joined by a disulfide bond. An N-linked (GlcNAc...) asparagine glycan is attached at N55. Zn(2+) contacts are provided by D87, N119, H222, and H245. Residues N313 and N335 are each glycosylated (N-linked (GlcNAc...) asparagine). Cystine bridges form between C355–C360 and C367–C389. R356 contributes to the AMP binding site. Position 356 (R356) interacts with IMP. Positions 392 and 397 each coordinate AMP. Residues N392 and R397 each contribute to the IMP site. A glycan (N-linked (GlcNAc...) asparagine) is linked at N405. Residue F419 coordinates AMP. F419 is a binding site for IMP. The cysteines at positions 478 and 481 are disulfide-linked. AMP-binding residues include Y502 and D508. IMP-binding residues include Y502 and D508. The GPI-anchor amidated serine moiety is linked to residue S551. A propeptide spans 552–576 (AASHYQGSFPLVILSFWAMILILYQ) (removed in mature form).

This sequence belongs to the 5'-nucleotidase family. As to quaternary structure, homodimer. The cofactor is Zn(2+). Expressed at high levels in the placenta, kidney, lung and stomach and at lower levels in the thymus, spleen, skeletal muscle and esophagus.

It is found in the cell membrane. The enzyme catalyses a ribonucleoside 5'-phosphate + H2O = a ribonucleoside + phosphate. It carries out the reaction a 2'-deoxyribonucleoside 5'-phosphate + H2O = a 2'-deoxyribonucleoside + phosphate. It catalyses the reaction dTMP + H2O = thymidine + phosphate. The catalysed reaction is CMP + H2O = cytidine + phosphate. The enzyme catalyses IMP + H2O = inosine + phosphate. It carries out the reaction AMP + H2O = adenosine + phosphate. It catalyses the reaction GMP + H2O = guanosine + phosphate. The catalysed reaction is UMP + H2O = uridine + phosphate. The enzyme catalyses dAMP + H2O = 2'-deoxyadenosine + phosphate. It carries out the reaction dCMP + H2O = 2'-deoxycytidine + phosphate. Functionally, catalyzes the hydrolysis of nucleotide monophosphates, releasing inorganic phosphate and the corresponding nucleoside. Hydrolyzes IMP. Shows a preference for ribonucleotide monophosphates over their equivalent deoxyribose forms. Although AMP is the preferred substrate can also hydrolyze UMP, GMP, CMP, dAMP, dCMP, dTMP, NAD and NMN. This chain is 5'-nucleotidase (Nt5e), found in Mus musculus (Mouse).